A 562-amino-acid chain; its full sequence is Nucleoprotein (562 aa).

The segment at M53–I238 is binding site for the cap structure m7GTP. Positions 381 and 383 each coordinate Mn(2+). Residues E391, C498, H501, and C522 each coordinate Zn(2+). D526 contacts Mn(2+).

Belongs to the arenaviridae nucleocapsid protein family. As to quaternary structure, homomultimerizes to form the nucleocapsid. Binds to viral genomic RNA. Interacts with glycoprotein G2. Interacts with protein Z; this interaction probably directs the encapsidated genome to budding sites. Interacts with protein L; this interaction does not interfere with Z-L interaction. Interacts with host IKBKE (via Protein kinase domain); the interaction inhibits IKBKE kinase activity.

The protein localises to the virion. The protein resides in the host cytoplasm. Encapsidates the genome, protecting it from nucleases. The encapsidated genomic RNA is termed the nucleocapsid (NC). Serves as template for viral transcription and replication. The increased presence of protein N in host cell does not seem to trigger the switch from transcription to replication as observed in other negative strain RNA viruses. Through the interaction with host IKBKE, strongly inhibits the phosphorylation and nuclear translocation of host IRF3, a protein involved in interferon activation pathway, leading to the inhibition of interferon-beta and IRF3-dependent promoters activation. Also encodes a functional 3'-5' exoribonuclease that degrades preferentially dsRNA substrates and thereby participates in the suppression of interferon induction. The sequence is that of Nucleoprotein from Neotoma (wood rats).